Reading from the N-terminus, the 141-residue chain is Lutropin subunit beta (141 aa).

The first 20 residues, 1–20, serve as a signal peptide directing secretion; sequence MERLQGLLLWLLLSPSVVWA. 6 disulfide bridges follow: Cys-29–Cys-77, Cys-43–Cys-92, Cys-46–Cys-130, Cys-54–Cys-108, Cys-58–Cys-110, and Cys-113–Cys-120. Residue Asn-33 is glycosylated (N-linked (GlcNAc...) asparagine).

It belongs to the glycoprotein hormones subunit beta family. As to quaternary structure, heterodimer of a common alpha chain and a unique beta chain which confers biological specificity to thyrotropin, lutropin, follitropin and gonadotropin.

The protein resides in the secreted. Functionally, promotes spermatogenesis and ovulation by stimulating the testes and ovaries to synthesize steroids. The polypeptide is Lutropin subunit beta (Lhb) (Rattus norvegicus (Rat)).